The chain runs to 306 residues: MIQKSRPALLQHQDVGDRVETLMLQPVIKAFLCGSISGTCSTVLFQPLDLLKTRLQTLQPSAHGSRRVGMLALLLTVVRTESLLGLWKGMSPSIVRCVPGVGIYFGTLYSLKQYFLRGHPPTALESVILGAGSRSVAGVCMSPITVIKTRYESGRYGYQSIYAALRSICHSEGFRGLFSGLTATLLRDAPFSGIYLMFYSQTKNVVLHSTDQLDAVLVPVVNFSCGIFAGILASLVTQPADVIKTHMQLSPVKFRWIGQSVTLIFKDYGLRGFFQGSVPRALRRTLVAAMAWTVYEEMMAKMGLKS.

Solcar repeat units lie at residues Q25 to Y114, P121 to V205, and L217 to K301. 6 consecutive transmembrane segments (helical) span residues F31–Q56, G89–F115, V127–E152, G180–K203, V221–M247, and G276–V294.

The protein belongs to the mitochondrial carrier (TC 2.A.29) family. SLC25A38 subfamily.

Its subcellular location is the mitochondrion inner membrane. It catalyses the reaction glycine(in) = glycine(out). In terms of biological role, mitochondrial glycine transporter that imports glycine into the mitochondrial matrix. Plays an important role in providing glycine for the first enzymatic step in heme biosynthesis, the condensation of glycine with succinyl-CoA to produce 5-aminolevulinate (ALA) in the mitochondrial matrix. Required during erythropoiesis. Plays a role as pro-apoptotic protein that induces caspase-dependent apoptosis. This chain is Mitochondrial glycine transporter, found in Ovis aries (Sheep).